The sequence spans 149 residues: Arginine repressor (149 aa).

This sequence belongs to the ArgR family.

Its subcellular location is the cytoplasm. It participates in amino-acid biosynthesis; L-arginine biosynthesis [regulation]. Functionally, regulates arginine biosynthesis genes. In Chlorobaculum tepidum (strain ATCC 49652 / DSM 12025 / NBRC 103806 / TLS) (Chlorobium tepidum), this protein is Arginine repressor.